Reading from the N-terminus, the 299-residue chain is N-acetylmuramic acid 6-phosphate etherase (299 aa).

An SIS domain is found at 57 to 220; the sequence is ISAAFHKKGR…TTGAMIRTGK (164 aa). The Proton donor role is filled by Glu-85. Residue Glu-116 is part of the active site.

It belongs to the GCKR-like family. MurNAc-6-P etherase subfamily. As to quaternary structure, homodimer.

It carries out the reaction N-acetyl-D-muramate 6-phosphate + H2O = N-acetyl-D-glucosamine 6-phosphate + (R)-lactate. It participates in amino-sugar metabolism; 1,6-anhydro-N-acetylmuramate degradation. Its pathway is amino-sugar metabolism; N-acetylmuramate degradation. It functions in the pathway cell wall biogenesis; peptidoglycan recycling. Functionally, specifically catalyzes the cleavage of the D-lactyl ether substituent of MurNAc 6-phosphate, producing GlcNAc 6-phosphate and D-lactate. Together with AnmK, is also required for the utilization of anhydro-N-acetylmuramic acid (anhMurNAc) either imported from the medium or derived from its own cell wall murein, and thus plays a role in cell wall recycling. The sequence is that of N-acetylmuramic acid 6-phosphate etherase from Psychromonas ingrahamii (strain DSM 17664 / CCUG 51855 / 37).